The sequence spans 284 residues: Bifunctional protein FolD (284 aa).

Residues 166 to 168 (GAS) and isoleucine 232 contribute to the NADP(+) site.

This sequence belongs to the tetrahydrofolate dehydrogenase/cyclohydrolase family. Homodimer.

It carries out the reaction (6R)-5,10-methylene-5,6,7,8-tetrahydrofolate + NADP(+) = (6R)-5,10-methenyltetrahydrofolate + NADPH. The catalysed reaction is (6R)-5,10-methenyltetrahydrofolate + H2O = (6R)-10-formyltetrahydrofolate + H(+). The protein operates within one-carbon metabolism; tetrahydrofolate interconversion. In terms of biological role, catalyzes the oxidation of 5,10-methylenetetrahydrofolate to 5,10-methenyltetrahydrofolate and then the hydrolysis of 5,10-methenyltetrahydrofolate to 10-formyltetrahydrofolate. In Glaesserella parasuis serovar 5 (strain SH0165) (Haemophilus parasuis), this protein is Bifunctional protein FolD.